Reading from the N-terminus, the 227-residue chain is Heptaprenylglyceryl phosphate synthase (227 aa).

Residue K13 coordinates sn-glycerol 1-phosphate. Mg(2+) contacts are provided by D15 and T41. Residues 159–164, G189, and 209–210 each bind sn-glycerol 1-phosphate; these read YLEYSG and GN.

Belongs to the GGGP/HepGP synthase family. Group I subfamily. Homodimer. The cofactor is Mg(2+).

It catalyses the reaction sn-glycerol 1-phosphate + all-trans-heptaprenyl diphosphate = 3-heptaprenyl-sn-glycero-1-phosphate + diphosphate. It participates in membrane lipid metabolism; glycerophospholipid metabolism. Its function is as follows. Prenyltransferase that catalyzes in vivo the transfer of the heptaprenyl moiety of heptaprenyl pyrophosphate (HepPP; 35 carbon atoms) to the C3 hydroxyl of sn-glycerol-1-phosphate (G1P), producing heptaprenylglyceryl phosphate (HepGP). This reaction is an ether-bond-formation step in the biosynthesis of archaea-type G1P-based membrane lipids found in Bacillales. This Exiguobacterium sibiricum (strain DSM 17290 / CCUG 55495 / CIP 109462 / JCM 13490 / 255-15) protein is Heptaprenylglyceryl phosphate synthase.